The following is a 196-amino-acid chain: uncharacterized protein (196 aa).

Over residues 21–35 the composition is skewed to basic and acidic residues; the sequence is ESRRKDGSVRRERAV. Disordered regions lie at residues 21 to 53 and 65 to 196; these read ESRRKDGSVRRERAVKPGYTAPEDIKRYRPGRG and LQLS…KEKE. Polar residues predominate over residues 66 to 75; sequence QLSNDASTSK. Basic and acidic residues-rich tracts occupy residues 84–94, 100–143, and 173–196; these read ELEKEKLERPL, EKND…KDFK, and KMSKRENKKSINTVDKKTGYKEKE.

This is an uncharacterized protein from Schizosaccharomyces pombe (strain 972 / ATCC 24843) (Fission yeast).